The sequence spans 433 residues: Citrate synthase, mitochondrial (433 aa).

Catalysis depends on residues His-274 and His-320. Arg-329 provides a ligand contact to oxaloacetate. Residue Asp-375 is part of the active site. Residues Arg-401 and Arg-421 each contribute to the oxaloacetate site.

The protein belongs to the citrate synthase family. As to quaternary structure, homodimer.

It localises to the mitochondrion matrix. The enzyme catalyses oxaloacetate + acetyl-CoA + H2O = citrate + CoA + H(+). The protein operates within carbohydrate metabolism; tricarboxylic acid cycle; isocitrate from oxaloacetate: step 1/2. Its function is as follows. Key enzyme of the Krebs tricarboxylic acid cycle which catalyzes the synthesis of citrate from acetyl coenzyme A and oxaloacetate. The sequence is that of Citrate synthase, mitochondrial (CS) from Gallus gallus (Chicken).